A 278-amino-acid chain; its full sequence is Dehydrogenase/reductase SDR family member 4 (278 aa).

Residue 36 to 60 coordinates NADP(+); that stretch reads LVTASTDGIGFAIARRLAQDGAHVV. Lys-92 bears the N6-acetyllysine; alternate mark. Lys-92 is modified (N6-succinyllysine; alternate). Lys-105 is subject to N6-acetyllysine. Residue Ile-140 is modified to Phosphoserine. Ser-169 is a substrate binding site. Tyr-182 acts as the Proton acceptor in catalysis. Lys-186 is an NADP(+) binding site. Residue Lys-216 is modified to N6-acetyllysine; alternate. Lys-216 carries the post-translational modification N6-succinyllysine; alternate. Phosphoserine is present on Ser-220. An N6-succinyllysine mark is found at Lys-227 and Lys-234. The Peroxisomal targeting signal motif lies at 276–278; the sequence is SRL.

It belongs to the short-chain dehydrogenases/reductases (SDR) family. As to quaternary structure, homotetramer. As to expression, predominantly expressed in normal cervix (at protein level). Expressed in some neoplastic cervical tissues, but not in normal cervix (at protein level). In terms of tissue distribution, expressed in a few neoplastic cervical tissues. As to expression, high expression in liver.

It localises to the peroxisome. The protein localises to the nucleus. The enzyme catalyses a secondary alcohol + NADP(+) = a ketone + NADPH + H(+). It carries out the reaction 3beta-hydroxy-5beta-pregnane-20-one + NADP(+) = 5beta-pregnan-3,20-dione + NADPH + H(+). It catalyses the reaction 5beta-dihydrotestosterone + NADPH + H(+) = 5beta-androstane-3beta,17beta-diol + NADP(+). The catalysed reaction is 5beta-androstane-3,17-dione + NADPH + H(+) = 3beta-hydroxy-5beta-androstane-17-one + NADP(+). The enzyme catalyses isatin + NADPH + H(+) = 3-hydroxyindolin-2-one + NADP(+). It carries out the reaction lithocholate + NADP(+) = 3-oxo-5beta-cholan-24-oate + NADPH + H(+). It catalyses the reaction 3-oxo-5beta-cholan-24-oate + NADPH + H(+) = isolithocholate + NADP(+). Inhibited by flavonoids (quercetin and genistein), cetylpyridium chloride, phenylhexane and valproic acid. Low inhibition is observed with fatty acids (myristic acid and lauric acid). No significant inhibition is observed with barbital, dicumarol, indomethacin, metyrapone, ethacrynic acid, disulfiram, hexestrol and benzodiazepines (diazepam and nitrazepam). NADPH-dependent oxidoreductase which catalyzes the reduction of a variety of compounds bearing carbonyl groups including ketosteroids, alpha-dicarbonyl compounds, aldehydes, aromatic ketones and quinones. Reduces 3-ketosteroids and benzil into 3beta-hydroxysteroids and R-benzoin, respectively, in contrast to the stereoselectivity of non-primate DHRS4s which produce 3alpha-hydroxysteroids and S-benzoin. Diplays low activity toward all-trans-retinal and no activity toward 9-cis-retinal as compared to non-primate mammals. In the reverse reaction, catalyze the NAD-dependent oxidation of 3beta-hydroxysteroids and alcohol, but with much lower efficiency. Involved in the metabolism of 3beta-hydroxysteroids, isatin and xenobiotic carbonyl compounds. Its function is as follows. No detected catalytic activity in vitro, possibly due to the lack of catalytic site. In terms of biological role, NADPH-dependent oxidoreductase which catalyzes the reduction of a variety of compounds bearing carbonyl groups including ketosteroids, alpha-dicarbonyl compounds, aldehydes, aromatic ketones and quinones. Involved in the metabolism of 3beta-hydroxysteroids, isatin and xenobiotic carbonyl compounds. Has a higher catalytic activity for xenobiotic alpha-dicarbonyl compounds, sucha as benzil, than isoform 1 and is involved in benzil detoxification. The polypeptide is Dehydrogenase/reductase SDR family member 4 (Homo sapiens (Human)).